We begin with the raw amino-acid sequence, 882 residues long: MRRMFGDCQVLSSMAAMAGAASSADALFASPLIPNPALAGFMSSSAAMPFHHFSNAAATLIPKEEGLMGGLHVAKDEGMDLEMDMELSGGSGSAHLDGLLSFADVDDDHKPQHSGHDQPPDAAQPSGAAGGNAKKKRYHRHTAHQIQQMEALFKECPHPDDKQRLKLSQELGLKPRQVKFWFQNRRTQMKAQQDRADNVILRAENENLKSDNFRLQAAIRNVVCPNCGHAAVLADMSYEEQQLRIENARLKDELDRLACIATRYGGGGGRQPVLSTSALSCISAPPPVLMPPLDLDMNVYSRHFAEQAPVMGCGDLIPPPVVPQHDGAAAYMGAMMAPVQEQDKQLVVDLAATAADQLARMCRAGEPLWVRQRGAEVMAVEEHARMFSWPVDGAKQGDGGAVARAEGTRDNAVVIMNSINLVDAFLDANKWMELFPSIVCKARTIQIINHGAASGHLGSGTLLLMQAEVQFLSPLVAAREVVFFRYCVHNADEGSWAIVDFPAEGFEEGLLQASVVRCRRRPSGCIIQDMPNGYSRVVWVEHMEMVGEEKPLQPVFRDYVASGAAFGATRWLSILQRQCERLASELARNIADLGVIRTPEARTNMMKLSQRMITTFCANISASGTQSWTALSDSTQDTIRVTTRKNTEPGQPSGVILTAVSTSWLPFTHQQVFELLADEQQRCQLEILSNGGSLHEVAHIANGSHPRNCISLLRINAASNSSQNVELLLQESSTHPDGGSLVVFATVDVDAIQVTMSGEDPSYIPLLPLGFAIFPATSPSPAAAPTISSSTTTTTGNGNGETSSTPPRNSSSNNNNADELLPPNGCLLTVGMQVLASAVPSAKLNLSSVTAINSHVCNAIHQITAALKSSAGGAGGEPASDQ.

A disordered region spans residues 104-144; sequence DVDDDHKPQHSGHDQPPDAAQPSGAAGGNAKKKRYHRHTAH. Positions 107-119 are enriched in basic and acidic residues; the sequence is DDHKPQHSGHDQP. Residues 133-143 are compositionally biased toward basic residues; that stretch reads AKKKRYHRHTA. The homeobox DNA-binding region spans 134–193; the sequence is KKKRYHRHTAHQIQQMEALFKECPHPDDKQRLKLSQELGLKPRQVKFWFQNRRTQMKAQQ. Residues 200–263 adopt a coiled-coil conformation; that stretch reads ILRAENENLK…LDRLACIATR (64 aa). The 245-residue stretch at 340–584 folds into the START domain; that stretch reads QEQDKQLVVD…LQRQCERLAS (245 aa). Over residues 782-816 the composition is skewed to low complexity; it reads AAAPTISSSTTTTTGNGNGETSSTPPRNSSSNNNN. Positions 782-820 are disordered; that stretch reads AAAPTISSSTTTTTGNGNGETSSTPPRNSSSNNNNADEL.

This sequence belongs to the HD-ZIP homeobox family. Class IV subfamily.

It localises to the nucleus. Probable transcription factor. This chain is Homeobox-leucine zipper protein ROC3 (ROC3), found in Oryza sativa subsp. japonica (Rice).